The chain runs to 369 residues: Protein RecA (369 aa).

Basic and acidic residues predominate over residues Met-1–Lys-10. The interval Met-1–Glu-20 is disordered. An ATP-binding site is contributed by Gly-82 to Thr-89. The segment at Pro-350 to Val-369 is disordered. The span at Asp-358–Val-369 shows a compositional bias: acidic residues.

Belongs to the RecA family.

The protein localises to the cytoplasm. Its function is as follows. Can catalyze the hydrolysis of ATP in the presence of single-stranded DNA, the ATP-dependent uptake of single-stranded DNA by duplex DNA, and the ATP-dependent hybridization of homologous single-stranded DNAs. It interacts with LexA causing its activation and leading to its autocatalytic cleavage. This Gloeobacter violaceus (strain ATCC 29082 / PCC 7421) protein is Protein RecA.